Reading from the N-terminus, the 268-residue chain is Tropinone reductase homolog At2g29150 (268 aa).

Residue 22 to 46 (LVTGGSKGLGEAVVEELAMLGARVH) coordinates NADP(+). A substrate-binding site is contributed by Ser-155. The active-site Proton acceptor is the Tyr-167.

The protein belongs to the short-chain dehydrogenases/reductases (SDR) family. SDR65C subfamily.

In terms of biological role, enantiospecific reductase active on cyclic monoterpenes and small flexible lipophilic carbonyls. No activity with tropinone, nitrogen-containing tropinone analogs, tropine or pseudotropine as substrate. This Arabidopsis thaliana (Mouse-ear cress) protein is Tropinone reductase homolog At2g29150.